We begin with the raw amino-acid sequence, 1715 residues long: Pentafunctional AROM polypeptide (1715 aa).

Positions 1 to 17 are enriched in polar residues; that stretch reads MTSTASAQQPVLRTKTP. The disordered stretch occupies residues 1-26; the sequence is MTSTASAQQPVLRTKTPSYHAPPSTD. The tract at residues 1–421 is 3-dehydroquinate synthase; that stretch reads MTSTASAQQP…VQNMASTVSD (421 aa). NAD(+) contacts are provided by residues 71-73, 112-115, 143-145, and D148; these read DQN, EASK, and GGV. R159 serves as a coordination point for 7-phospho-2-dehydro-3-deoxy-D-arabino-heptonate. An NAD(+)-binding site is contributed by 168-169; that stretch reads TT. 7-phospho-2-dehydro-3-deoxy-D-arabino-heptonate contacts are provided by D175 and K181. Residue K190 coordinates NAD(+). 7-phospho-2-dehydro-3-deoxy-D-arabino-heptonate is bound at residue N191. NAD(+) is bound by residues 208–211 and N219; that span reads WLKT. Residue E223 coordinates Zn(2+). 7-phospho-2-dehydro-3-deoxy-D-arabino-heptonate contacts are provided by residues 223–226 and K287; that span reads EVVK. E297 functions as the Proton acceptor; for 3-dehydroquinate synthase activity in the catalytic mechanism. 7-phospho-2-dehydro-3-deoxy-D-arabino-heptonate-binding positions include 301–305 and H308; that span reads RNLVN. Residue H308 participates in Zn(2+) binding. H312 (proton acceptor; for 3-dehydroquinate synthase activity) is an active-site residue. H324 and K393 together coordinate 7-phospho-2-dehydro-3-deoxy-D-arabino-heptonate. Residue H324 participates in Zn(2+) binding. Positions 434-895 are EPSP synthase; sequence VTPIHEQPNK…WDDLERKLGI (462 aa). Catalysis depends on C877, which acts as the For EPSP synthase activity. Positions 948–1165 are shikimate kinase; the sequence is HATIICIGMR…KGGRRTYFLS (218 aa). An ATP-binding site is contributed by 955-962; it reads GMRASGKT. The tract at residues 1166–1389 is 3-dehydroquinase; sequence LTFPDVVPKL…AAPGQLSFRQ (224 aa). The Proton acceptor; for 3-dehydroquinate dehydratase activity role is filled by H1292. Residue K1320 is the Schiff-base intermediate with substrate; for 3-dehydroquinate dehydratase activity of the active site. The tract at residues 1402-1715 is shikimate dehydrogenase; it reads ARRFALFGSP…AAWDVYLQRC (314 aa).

It in the N-terminal section; belongs to the sugar phosphate cyclases superfamily. Dehydroquinate synthase family. This sequence in the 2nd section; belongs to the EPSP synthase family. In the 3rd section; belongs to the shikimate kinase family. The protein in the 4th section; belongs to the type-I 3-dehydroquinase family. It in the C-terminal section; belongs to the shikimate dehydrogenase family. As to quaternary structure, homodimer. It depends on Zn(2+) as a cofactor.

The protein localises to the cytoplasm. It carries out the reaction 7-phospho-2-dehydro-3-deoxy-D-arabino-heptonate = 3-dehydroquinate + phosphate. The catalysed reaction is 3-dehydroquinate = 3-dehydroshikimate + H2O. The enzyme catalyses shikimate + NADP(+) = 3-dehydroshikimate + NADPH + H(+). It catalyses the reaction shikimate + ATP = 3-phosphoshikimate + ADP + H(+). It carries out the reaction 3-phosphoshikimate + phosphoenolpyruvate = 5-O-(1-carboxyvinyl)-3-phosphoshikimate + phosphate. The protein operates within metabolic intermediate biosynthesis; chorismate biosynthesis; chorismate from D-erythrose 4-phosphate and phosphoenolpyruvate: step 2/7. Its pathway is metabolic intermediate biosynthesis; chorismate biosynthesis; chorismate from D-erythrose 4-phosphate and phosphoenolpyruvate: step 3/7. It participates in metabolic intermediate biosynthesis; chorismate biosynthesis; chorismate from D-erythrose 4-phosphate and phosphoenolpyruvate: step 4/7. It functions in the pathway metabolic intermediate biosynthesis; chorismate biosynthesis; chorismate from D-erythrose 4-phosphate and phosphoenolpyruvate: step 5/7. The protein operates within metabolic intermediate biosynthesis; chorismate biosynthesis; chorismate from D-erythrose 4-phosphate and phosphoenolpyruvate: step 6/7. The AROM polypeptide catalyzes 5 consecutive enzymatic reactions in prechorismate polyaromatic amino acid biosynthesis. This is Pentafunctional AROM polypeptide from Mycosarcoma maydis (Corn smut fungus).